The primary structure comprises 127 residues: Glycine cleavage system H protein (127 aa).

The Lipoyl-binding domain maps to T24–R105. K65 carries the N6-lipoyllysine modification.

Belongs to the GcvH family. In terms of assembly, the glycine cleavage system is composed of four proteins: P, T, L and H. (R)-lipoate is required as a cofactor.

The glycine cleavage system catalyzes the degradation of glycine. The H protein shuttles the methylamine group of glycine from the P protein to the T protein. This Methylococcus capsulatus (strain ATCC 33009 / NCIMB 11132 / Bath) protein is Glycine cleavage system H protein.